A 213-amino-acid polypeptide reads, in one-letter code: mRNA-decapping protein D9 (213 aa).

The region spanning 30–209 (KDTHVFAACI…EYLSYIYNML (180 aa)) is the Nudix hydrolase domain. The Nudix box signature appears at 111-132 (GKLDKKESIKDCLRRELKEESD). Residue glutamate 117 participates in Mg(2+) binding. The Nucleophile role is filled by glutamate 126. Mg(2+)-binding residues include glutamate 130 and aspartate 151.

This sequence belongs to the Nudix hydrolase family. Mg(2+) is required as a cofactor. Mn(2+) serves as cofactor.

Functionally, decapping enzyme required for the removal of the 5'-end m7GpppN cap tethered to viral and host mRNAs to allow their decay in cells. May therefore accelerate viral and cellular mRNA turnover to eliminate competing host mRNAs and allow stage-specific synthesis of viral proteins. Acceleration of the turnover of cellular transcripts may even promote the shutoff of host protein synthesis. Does not cleave unmethylated RNAs or RNAs shorter than 24 nucleotides. This Homo sapiens (Human) protein is mRNA-decapping protein D9.